The following is a 329-amino-acid chain: Ubiquitin carboxyl-terminal hydrolase isozyme L5 (329 aa).

The UCH catalytic domain occupies Glu-7–Ser-225. Lys-47 carries the N6-succinyllysine modification. The active-site Nucleophile is Cys-88. Lys-158 is modified (N6-acetyllysine). His-164 acts as the Proton donor in catalysis. Lys-289 carries the post-translational modification N6-succinyllysine. The 29-residue stretch at Asn-291–Lys-319 folds into the ULD domain. The segment at Val-313 to Lys-329 is interaction with ADRM1.

This sequence belongs to the peptidase C12 family. In terms of assembly, component of the 19S (PA700) regulatory complex of the 26S proteasome. Interacts with ADRM1 and NFRKB. Component of the INO80 complex; specifically part of a complex module associated with N-terminus of INO80.

It is found in the cytoplasm. Its subcellular location is the nucleus. It catalyses the reaction Thiol-dependent hydrolysis of ester, thioester, amide, peptide and isopeptide bonds formed by the C-terminal Gly of ubiquitin (a 76-residue protein attached to proteins as an intracellular targeting signal).. With respect to regulation, activated by ADRM1. Inhibited by interaction with NFRKB. In terms of biological role, protease that specifically cleaves 'Lys-48'-linked polyubiquitin chains. Deubiquitinating enzyme associated with the 19S regulatory subunit of the 26S proteasome. Putative regulatory component of the INO80 complex; however is inactive in the INO80 complex and is activated by a transient interaction of the INO80 complex with the proteasome via ADRM1. This is Ubiquitin carboxyl-terminal hydrolase isozyme L5 (UCHL5) from Sus scrofa (Pig).